Here is a 487-residue protein sequence, read N- to C-terminus: b(0,+)-type amino acid transporter 1 (487 aa).

Residues 1–20 (MEETSLRRRREDEKSTHSTE) form a disordered region. The Cytoplasmic segment spans residues 1-31 (MEETSLRRRREDEKSTHSTELKTTSLQKEVG). Ser18 is modified (phosphoserine). Residues 32 to 55 (LLSGICIIVGTIIGSGIFISPKSV) form a helical membrane-spanning segment. Position 43 to 47 (43 to 47 (IIGSG)) interacts with L-arginine. Over 56-62 (LANTESV) the chain is Extracellular. The helical transmembrane segment at 63–84 (GPCLIIWAACGILATLGALCFA) threads the bilayer. Topologically, residues 85–110 (ELGTMITKSGGEYPYLMEAFGPIPAY) are cytoplasmic. A helical transmembrane segment spans residues 111-137 (LFSWTSLIVMKPSSFAIICLSFSEYVC). Residues 138-147 (AAFYSGCKPP) lie on the Extracellular side of the membrane. Helical transmembrane passes span 148–169 (AVVVKLLAAAAILFITTVNALS) and 170–193 (VRLGSYVQNVFTAAKMVIVAIIII). At 194-217 (SGLVFLAQGNVKNFQNSFEGTQTS) the chain is on the extracellular side. A helical membrane pass occupies residues 218–238 (VGAISLAFYNGLWAYDGWNQL). Residue Asp233 participates in L-arginine binding. The Cytoplasmic portion of the chain corresponds to 239–251 (NYITEELRNPYRN). A helical transmembrane segment spans residues 252–274 (LPMAIVIGIPLVTVCYILMNIAY). Over 275 to 302 (FTVMTPTELLQSQAVAVTFGDRVLYPAS) the chain is Extracellular. A helical transmembrane segment spans residues 303–325 (WVVPLFVAFSTIGAANGTCFTAG). Over 326-351 (RLIYVAGREGHMLKVLSYISVKRLTP) the chain is Cytoplasmic. Helical transmembrane passes span 352 to 370 (APALIFYGIIAIIYIIPGD) and 371 to 391 (INSLVNYFSFAAWLFYGMTIL). Topologically, residues 392-410 (GLVVMRFTRKDLERPIKVP) are cytoplasmic. The helical transmembrane segment at 411-431 (LFIPIIVILVSLFLILAPIIS) threads the bilayer. Over 432–434 (EPA) the chain is Extracellular. Residues 435–450 (WEYLYCVLFILSGLIF) traverse the membrane as a helical segment. Residues 451-487 (YFLFVYYKFGWAQRISRPVTKHLQMLMEVVPPEKDPE) lie on the Cytoplasmic side of the membrane.

This sequence belongs to the amino acid-polyamine-organocation (APC) superfamily. As to quaternary structure, disulfide-linked heterodimer composed of the catalytic light chain subunit SLC7A9 and the heavy chain subunit SLC3A1. The heterodimer is the minimal functional unit. Assembles in heterotetramers (dimers of heterodimers) and higher order oligomers; the oligomerization is mediated by SLC3A1 likely to prevent degradation and facilitate heteromer trafficking to the plasma membrane. Interacts with CAV1. In terms of tissue distribution, expressed in the brush border membrane in the kidney (at protein level).

Its subcellular location is the apical cell membrane. The catalysed reaction is L-leucine(out) + L-arginine(in) = L-leucine(in) + L-arginine(out). The enzyme catalyses L-histidine(out) + L-arginine(in) = L-histidine(in) + L-arginine(out). It catalyses the reaction L-arginine(in) + L-phenylalanine(out) = L-arginine(out) + L-phenylalanine(in). It carries out the reaction L-cysteine(out) + L-arginine(in) = L-cysteine(in) + L-arginine(out). The catalysed reaction is L-cystine(out) + L-arginine(in) = L-cystine(in) + L-arginine(out). The enzyme catalyses L-lysine(out) + L-arginine(in) = L-lysine(in) + L-arginine(out). Functionally, associates with SLC3A1 to form a functional transporter complex that mediates the electrogenic exchange between cationic amino acids and neutral amino acids, with a stoichiometry of 1:1. Has system b(0,+)-like activity with high affinity for extracellular cationic amino acids and L-cystine and lower affinity for intracellular neutral amino acids. Substrate exchange is driven by high concentration of intracellular neutral amino acids and the intracellular reduction of L-cystine to L-cysteine. Required for reabsorption of L-cystine and dibasic amino acids across the brush border membrane in renal proximal tubules. The polypeptide is b(0,+)-type amino acid transporter 1 (Slc7a9) (Mus musculus (Mouse)).